The chain runs to 315 residues: Protein translocase subunit SecF (315 aa).

6 helical membrane passes run 12–32 (AWIV…ISWA), 136–156 (ALFR…IIYL), 166–186 (VFAI…FAIF), 188–208 (LVGG…IIGF), 247–267 (SINT…FGGD), and 271–291 (FFAL…IFMA).

The protein belongs to the SecD/SecF family. SecF subfamily. Forms a complex with SecD. Part of the essential Sec protein translocation apparatus which comprises SecA, SecYEG and auxiliary proteins SecDF. Other proteins may also be involved.

The protein resides in the cell inner membrane. Functionally, part of the Sec protein translocase complex. Interacts with the SecYEG preprotein conducting channel. SecDF uses the proton motive force (PMF) to complete protein translocation after the ATP-dependent function of SecA. Its function is as follows. Probably participates in protein translocation into and across both the cytoplasmic and thylakoid membranes in cyanobacterial cells. The protein is Protein translocase subunit SecF of Synechocystis sp. (strain ATCC 27184 / PCC 6803 / Kazusa).